Reading from the N-terminus, the 304-residue chain is Acetylxylan esterase A (304 aa).

The N-terminal stretch at 1–24 (MLLSTHLLFVITTLVTSLLHPIDG) is a signal peptide. Ser148 functions as the Charge relay system in the catalytic mechanism. The N-linked (GlcNAc...) asparagine glycan is linked to Asn190.

The protein belongs to the carbohydrate esterase 1 (CE1) family. AxeA subfamily. As to quaternary structure, monomer.

Its subcellular location is the secreted. The enzyme catalyses Deacetylation of xylans and xylo-oligosaccharides.. The protein operates within glycan degradation; xylan degradation. With respect to regulation, inactivated by di-isopropylfluorophosphate and phenylmethylsulfonylfluorid (PMSF), a specific inhibitor of serine esterases. Acetylxylan esterase involved in the hydrolysis of xylan, a major structural heterogeneous polysaccharide found in plant biomass representing the second most abundant polysaccharide in the biosphere, after cellulose. Degrades acetylated xylans by cleaving acetyl side groups from the hetero-xylan backbone. The chain is Acetylxylan esterase A (axeA) from Aspergillus awamori (Black koji mold).